The following is a 362-amino-acid chain: UDP-N-acetylglucosamine--N-acetylmuramyl-(pentapeptide) pyrophosphoryl-undecaprenol N-acetylglucosamine transferase (362 aa).

UDP-N-acetyl-alpha-D-glucosamine is bound by residues 10 to 12, N124, S194, I249, and Q294; that span reads TGG.

It belongs to the glycosyltransferase 28 family. MurG subfamily.

It is found in the cell membrane. The enzyme catalyses Mur2Ac(oyl-L-Ala-gamma-D-Glu-L-Lys-D-Ala-D-Ala)-di-trans,octa-cis-undecaprenyl diphosphate + UDP-N-acetyl-alpha-D-glucosamine = beta-D-GlcNAc-(1-&gt;4)-Mur2Ac(oyl-L-Ala-gamma-D-Glu-L-Lys-D-Ala-D-Ala)-di-trans,octa-cis-undecaprenyl diphosphate + UDP + H(+). It participates in cell wall biogenesis; peptidoglycan biosynthesis. In terms of biological role, cell wall formation. Catalyzes the transfer of a GlcNAc subunit on undecaprenyl-pyrophosphoryl-MurNAc-pentapeptide (lipid intermediate I) to form undecaprenyl-pyrophosphoryl-MurNAc-(pentapeptide)GlcNAc (lipid intermediate II). The polypeptide is UDP-N-acetylglucosamine--N-acetylmuramyl-(pentapeptide) pyrophosphoryl-undecaprenol N-acetylglucosamine transferase (Pediococcus pentosaceus (strain ATCC 25745 / CCUG 21536 / LMG 10740 / 183-1w)).